The sequence spans 268 residues: MGQKVNSNGLRFGINKNWISRWTASSNQQTATWLVQDEKIRNLFFINYRNAQVSNVEIERTQTTVDVYVYAAQPALLIGSENKNIQKITKMIQIIVGRKIKLDLTINEIGSPMLSSRIIARDIANAIENRVPLRSAMRQALTKVLKAGANGIKVLVSGRLNGAEIARDKMYIEGNMPLSTLRADIDYAFEKAKTTYGIIGVKVWINRGMIYAKGLNRTPAHILHPQKKQLKTPTIKKTNSVIAKQKLTGSDIETASLKALTDNNQNHE.

One can recognise a KH type-2 domain in the interval 40–110; sequence IRNLFFINYR…KLDLTINEIG (71 aa).

It belongs to the universal ribosomal protein uS3 family. As to quaternary structure, part of the 30S ribosomal subunit. Forms a tight complex with proteins S10 and S14.

Functionally, binds the lower part of the 30S subunit head. Binds mRNA in the 70S ribosome, positioning it for translation. The sequence is that of Small ribosomal subunit protein uS3 from Mycoplasma genitalium (strain ATCC 33530 / DSM 19775 / NCTC 10195 / G37) (Mycoplasmoides genitalium).